A 976-amino-acid chain; its full sequence is Probable basic-leucine zipper transcription factor Q (976 aa).

Coiled coils occupy residues 57–110 and 136–287; these read AIDS…QYQQ and QQQQ…QQQQ. Positions 104 to 128 are disordered; sequence YQQQYQQPYTTPSPPDQIDYNQQLS. Polar residues-rich tracts occupy residues 374–385 and 393–411; these read TNFNGTNNSTPN and KLSS…SPPS. The interval 374–499 is disordered; sequence TNFNGTNNST…PIDSNGDFDL (126 aa). 2 stretches are compositionally biased toward low complexity: residues 420–468 and 476–490; these read PKNN…FNNN and STTT…MTSP. The bZIP domain occupies 504-567; sequence EKKKSISRIN…GVEVMRPEPE (64 aa). The tract at residues 505–507 is basic motif; the sequence is KKK. The segment at 509 to 516 is leucine-zipper; that stretch reads ISRINQNL. Residues 855–938 are compositionally biased toward low complexity; that stretch reads ENQSNNFGNN…VNSNNNNFNN (84 aa). Residues 855-957 form a disordered region; it reads ENQSNNFGNN…SADAIPYPST (103 aa).

It belongs to the bZIP family.

It localises to the nucleus. In terms of biological role, probable transcriptional regulator. This is Probable basic-leucine zipper transcription factor Q (bzpQ) from Dictyostelium discoideum (Social amoeba).